Here is a 369-residue protein sequence, read N- to C-terminus: MPPTPCSLCHTARALVKRPKTGQQVCKDCFFEVFETEVHNTIVEGEGIFKRGERVAIGASGGKDSTVLAHVLSVLNKRYDYGLDLYLLSIDEGITGYRDDSLETVKQNQAEYGLPLKILSYSELYGWTMDKIVEQVGKKNNCTFCGVFRRQALDRGAAQLGVDHIVTGHNADDIAETVLMNIMRGDIARLARCTAVTTQSEDTIKRSKPFKYAYEKEIVMYAYFKKLTYFSTECIYSPDAYRGHARVFLKDLEAVRPSAIVDIIHSGESFVLEQSVQRGMKALQTCLRCGYISSNDLCKACALLEGLESGLSRSALRQTQESTSAAPEGHRTIPMFERYASLNGTPRTPPTPAEPVEGIERAVRTIEIV.

Belongs to the TtcA family. CTU1/NCS6/ATPBD3 subfamily.

The protein resides in the cytoplasm. The protein operates within tRNA modification; 5-methoxycarbonylmethyl-2-thiouridine-tRNA biosynthesis. Its function is as follows. Plays a central role in 2-thiolation of mcm(5)S(2)U at tRNA wobble positions of tRNA(Lys), tRNA(Glu) and tRNA(Gln). Directly binds tRNAs and probably acts by catalyzing adenylation of tRNAs, an intermediate required for 2-thiolation. It is unclear whether it acts as a sulfurtransferase that transfers sulfur from thiocarboxylated URM1 onto the uridine of tRNAs at wobble position. Prior mcm(5) tRNA modification by the elongator complex is required for 2-thiolation. May also be involved in protein urmylation. In Cryptococcus neoformans var. neoformans serotype D (strain JEC21 / ATCC MYA-565) (Filobasidiella neoformans), this protein is Cytoplasmic tRNA 2-thiolation protein 1.